The primary structure comprises 266 residues: Chorismate mutase (266 aa).

In terms of domain architecture, Chorismate mutase spans 7 to 263 (MADSERALNL…EVEYLMQRLI (257 aa)). L-tyrosine contacts are provided by Arg-77, Arg-78, Asn-144, Gly-146, Ser-147, and Thr-150. L-tryptophan-binding residues include Asn-144, Gly-146, and Ser-147.

As to quaternary structure, homodimer.

The protein localises to the cytoplasm. The catalysed reaction is chorismate = prephenate. It functions in the pathway metabolic intermediate biosynthesis; prephenate biosynthesis; prephenate from chorismate: step 1/1. Each dimer has two allosteric binding sites that can bind the regulatory effectors tryptophan or tyrosine. Can bind either one tryptophan or one tyrosine, two tryptophan or two tyrosine or one tryptophan and one tyrosine, which differentially affect the catalytic activity. Activated by tryptophan and subject to feedback inhibition by tyrosine. In the presence of both tryptophan and tyrosine, the enzyme is in the activated state. Functionally, catalyzes the Claisen rearrangement of chorismate to prephenate. Acts at the first branch point in the aromatic amino acid pathway where it steers biosynthesis towards phenylalanine and tyrosine, and away from tryptophan. This Trichoderma parareesei (Filamentous fungus) protein is Chorismate mutase.